The chain runs to 30 residues: Trypsin inhibitor 2 (30 aa).

3 disulfide bridges follow: cysteine 3–cysteine 20, cysteine 10–cysteine 22, and cysteine 16–cysteine 29.

This sequence belongs to the protease inhibitor I7 (squash-type serine protease inhibitor) family.

Its subcellular location is the secreted. Functionally, inhibits trypsin. The sequence is that of Trypsin inhibitor 2 from Luffa aegyptiaca (Sponge gourd).